The chain runs to 145 residues: SsrA-binding protein (145 aa).

It belongs to the SmpB family.

It localises to the cytoplasm. In terms of biological role, required for rescue of stalled ribosomes mediated by trans-translation. Binds to transfer-messenger RNA (tmRNA), required for stable association of tmRNA with ribosomes. tmRNA and SmpB together mimic tRNA shape, replacing the anticodon stem-loop with SmpB. tmRNA is encoded by the ssrA gene; the 2 termini fold to resemble tRNA(Ala) and it encodes a 'tag peptide', a short internal open reading frame. During trans-translation Ala-aminoacylated tmRNA acts like a tRNA, entering the A-site of stalled ribosomes, displacing the stalled mRNA. The ribosome then switches to translate the ORF on the tmRNA; the nascent peptide is terminated with the 'tag peptide' encoded by the tmRNA and targeted for degradation. The ribosome is freed to recommence translation, which seems to be the essential function of trans-translation. This Mesomycoplasma hyopneumoniae (strain 232) (Mycoplasma hyopneumoniae) protein is SsrA-binding protein.